We begin with the raw amino-acid sequence, 81 residues long: NAD(P)H-quinone oxidoreductase subunit O (81 aa).

The protein belongs to the complex I NdhO subunit family. In terms of assembly, NDH-1 can be composed of about 15 different subunits; different subcomplexes with different compositions have been identified which probably have different functions.

Its subcellular location is the cellular thylakoid membrane. It carries out the reaction a plastoquinone + NADH + (n+1) H(+)(in) = a plastoquinol + NAD(+) + n H(+)(out). The catalysed reaction is a plastoquinone + NADPH + (n+1) H(+)(in) = a plastoquinol + NADP(+) + n H(+)(out). NDH-1 shuttles electrons from an unknown electron donor, via FMN and iron-sulfur (Fe-S) centers, to quinones in the respiratory and/or the photosynthetic chain. The immediate electron acceptor for the enzyme in this species is believed to be plastoquinone. Couples the redox reaction to proton translocation, and thus conserves the redox energy in a proton gradient. Cyanobacterial NDH-1 also plays a role in inorganic carbon-concentration. This chain is NAD(P)H-quinone oxidoreductase subunit O, found in Prochlorococcus marinus (strain MIT 9303).